We begin with the raw amino-acid sequence, 195 residues long: MAWVLASTSPRRKELLAQAGFSHLDFSFQLVAPNIDETPLSTETAEQYVCRLALEKAQAGLALSSHVVKPQVLGSDTIVVLNGLILGKPIDQNDAKRMLALLSGQTHEVMTAVALTDGEHTFNRLCRTQVSFCELSAADIDAYVGSGEPMDKAGAYGIQALGGCFVKSITGSYSAVVGLPLVETRELLACMMQHT.

The Proton acceptor role is filled by Asp-76.

Belongs to the Maf family. YhdE subfamily. The cofactor is a divalent metal cation.

It localises to the cytoplasm. The enzyme catalyses dTTP + H2O = dTMP + diphosphate + H(+). The catalysed reaction is UTP + H2O = UMP + diphosphate + H(+). Its function is as follows. Nucleoside triphosphate pyrophosphatase that hydrolyzes dTTP and UTP. May have a dual role in cell division arrest and in preventing the incorporation of modified nucleotides into cellular nucleic acids. In Shewanella frigidimarina (strain NCIMB 400), this protein is dTTP/UTP pyrophosphatase.